Here is a 1009-residue protein sequence, read N- to C-terminus: Translation initiation factor IF-2 (1009 aa).

Residues 1–415 (MSDENENGRP…EREKEKRRGG (415 aa)) form a disordered region. The span at 94–110 (EELRARQRVVDAAREAQ) shows a compositional bias: basic and acidic residues. The span at 111 to 121 (ARQVAEQAAAE) shows a compositional bias: low complexity. The span at 122 to 136 (ARARAAQEAAQREAA) shows a compositional bias: basic and acidic residues. The segment covering 137–146 (AKAAAERAAA) has biased composition (low complexity). Residues 147–174 (APPPVAQAPAAPAPAAPVTPPPAAPQAP) show a composition bias toward pro residues. Residues 175 to 189 (RPVAQAPVAPSAPRQ) show a composition bias toward low complexity. Basic and acidic residues-rich tracts occupy residues 208-218 (EPSRDRRDDRP) and 251-287 (PRPE…RPQG). Residues 311–320 (GGPPRGPRPG) are compositionally biased toward pro residues. Basic and acidic residues-rich tracts occupy residues 346–358 (MDRR…DRRK) and 403–415 (RARE…RRGG). The 171-residue stretch at 505–675 (LRPPVVTIMG…LLQAEVLDLK (171 aa)) folds into the tr-type G domain. The segment at 514–521 (GHVDHGKT) is G1. 514–521 (GHVDHGKT) contributes to the GTP binding site. Residues 539-543 (GITQH) are G2. Positions 561-564 (DTPG) are G3. GTP-binding positions include 561–565 (DTPGH) and 615–618 (NKMD). The tract at residues 615 to 618 (NKMD) is G4. The tract at residues 651–653 (SAK) is G5.

Belongs to the TRAFAC class translation factor GTPase superfamily. Classic translation factor GTPase family. IF-2 subfamily.

It is found in the cytoplasm. Its function is as follows. One of the essential components for the initiation of protein synthesis. Protects formylmethionyl-tRNA from spontaneous hydrolysis and promotes its binding to the 30S ribosomal subunits. Also involved in the hydrolysis of GTP during the formation of the 70S ribosomal complex. This is Translation initiation factor IF-2 from Caulobacter vibrioides (strain ATCC 19089 / CIP 103742 / CB 15) (Caulobacter crescentus).